The chain runs to 396 residues: MKRQNVRTLSLIACTFTYLLVGAAVFDALESDHEMREEEKLKAEEVRLRGKYNISSDDYQQLELVILQSEPHRAGVQWKFAGSFYFAITVITTIGYGHAAPGTDAGKAFCMFYAVLGIPLTLVMFQSLGERMNTFVRYLLKRIKKCCGMRNTEVSMENMVTVGFFSCMGTLCLGAAAFSQCEDWSFFHAYYYCFITLTTIGFGDFVALQSKGALQRKPFYVAFSFMYILVGLTVIGAFLNLVVLRFLTMNTDEDLLEGEVAQILAGNPRRVVVRVPQSRKRHHPMYFLRKYGRTLCYLCFPGANWGDDDDDDDDAVENVVVTTPVPPAVAAAAAAATPGPSTRNVRATVHSVSCRVEEIPPDVLRNTYFRSPFGAIPPGMHTCGENHRLHIRRKSI.

At 1 to 8 the chain is on the cytoplasmic side; it reads MKRQNVRT. A helical membrane pass occupies residues 9–29; sequence LSLIACTFTYLLVGAAVFDAL. Residues 30-88 lie on the Extracellular side of the membrane; sequence ESDHEMREEEKLKAEEVRLRGKYNISSDDYQQLELVILQSEPHRAGVQWKFAGSFYFAI. Asn53 carries an N-linked (GlcNAc...) asparagine glycan. The pore-forming intramembrane region spans 89 to 101; the sequence is TVITTIGYGHAAP. K(+)-binding residues include Thr93, Ile94, Gly95, and Tyr96. The interval 93–98 is selectivity filter 1; that stretch reads TIGYGH. The Extracellular segment spans residues 102-107; sequence GTDAGK. The chain crosses the membrane as a helical span at residues 108 to 128; it reads AFCMFYAVLGIPLTLVMFQSL. Residues 129-158 lie on the Cytoplasmic side of the membrane; it reads GERMNTFVRYLLKRIKKCCGMRNTEVSMEN. The helical transmembrane segment at 159-179 threads the bilayer; that stretch reads MVTVGFFSCMGTLCLGAAAFS. Topologically, residues 180-194 are extracellular; sequence QCEDWSFFHAYYYCF. An intramembrane region (pore-forming) is located at residues 195–207; sequence ITLTTIGFGDFVA. K(+)-binding residues include Thr199, Ile200, Gly201, and Phe202. Residues 199 to 204 are selectivity filter 2; the sequence is TIGFGD. The Extracellular portion of the chain corresponds to 208–218; the sequence is LQSKGALQRKP. Residues 219–239 form a helical membrane-spanning segment; the sequence is FYVAFSFMYILVGLTVIGAFL. Over 240-396 the chain is Cytoplasmic; it reads NLVVLRFLTM…HRLHIRRKSI (157 aa). The X-gate stretch occupies residues 243–248; it reads VLRFLT.

The protein belongs to the two pore domain potassium channel (TC 1.A.1.8) family. Homodimer. Heterodimer with KCNK1. Heterodimer with KCNK3. As to expression, highly expressed in the CNS and at lower levels in the colon, kidney, liver, lung, spleen, stomach and skeletal muscle. The highest expression was found in the olfactory nuclei, piriform cortex, cerebellum, antedorsal thalmic nucleus, pontine nucleus, dorsal raphe and several nuclei in the medulla. Shows a non-homogeneous distribution in the hippocampus. Expressed at highest levels in the lateral posterior and inferior portions and at medium levels in neocortex. Expressed in motoneurons, including hypoglossal motoneurons (at protein level).

It is found in the cell membrane. The protein localises to the mitochondrion inner membrane. The protein resides in the cell projection. Its subcellular location is the dendrite. It carries out the reaction K(+)(in) = K(+)(out). The catalysed reaction is Na(+)(in) = Na(+)(out). With respect to regulation, activated by halothane and isoflurane. Inhibited by external acidification, diacylglycerol, anandamide and AGT/angiotensin II. Ruthenium red inhibits homomeric but not KCNK3:KCNK9 heteromeric channels. Its function is as follows. K(+) channel that conducts voltage-dependent outward rectifying currents upon membrane depolarization. Voltage sensing is coupled to K(+) electrochemical gradient in an 'ion flux gating' mode where outward but not inward ion flow opens the gate. Changes ion selectivity and becomes permeable to Na(+) ions in response to extracellular acidification. Protonation of the pH sensor His-98 stabilizes C-type inactivation conformation likely converting the channel from outward K(+)-conducting, to inward Na(+)-conducting to nonconductive state. Homo- and heterodimerizes to form functional channels with distinct regulatory and gating properties. Allows K(+) currents with fast-gating kinetics important for the repolarization and hyperpolarization phases of action potentials. In granule neurons, hyperpolarizes the resting membrane potential to limit intrinsic neuronal excitability, but once the action potential threshold is reached, supports high-frequency action potential firing and increased neuronal excitability. Homomeric and/or heteromeric KCNK3:KCNK9 channels operate in cerebellar granule cells, whereas heteromeric KCNK1:KCNK9 enables currents in hippocampal dentate gyrus granule neurons. Dispensable for central chemosensory respiration i.e. breathing controlled by brainstem CO2/pH, it rather conducts pH-sensitive currents and controls the firing rate of serotonergic raphe neurons involved in potentiation of the respiratory chemoreflex. In retinal ganglion cells, mediates outward rectifying currents that regulate action potentials in response to acidification of the synaptic cleft. Involved in transmission of image-forming and nonimage-forming visual information in the retina. In adrenal gland, contributes to the maintenance of a hyperpolarized resting membrane potential of aldosterone-producing cells at zona glomerulosa and limits aldosterone release as part of a regulatory mechanism that controls arterial blood pressure and electrolyte homeostasis. The chain is Potassium channel subfamily K member 9 from Rattus norvegicus (Rat).